The chain runs to 278 residues: Energy-coupling factor transporter ATP-binding protein EcfA1 (278 aa).

In terms of domain architecture, ABC transporter spans 5–240; the sequence is IEVRNLKYKY…EDLEELGLDQ (236 aa). 40-47 contacts ATP; sequence GHNGSGKS.

The protein belongs to the ABC transporter superfamily. Energy-coupling factor EcfA family. As to quaternary structure, forms a stable energy-coupling factor (ECF) transporter complex composed of 2 membrane-embedded substrate-binding proteins (S component), 2 ATP-binding proteins (A component) and 2 transmembrane proteins (T component).

It localises to the cell membrane. In terms of biological role, ATP-binding (A) component of a common energy-coupling factor (ECF) ABC-transporter complex. Unlike classic ABC transporters this ECF transporter provides the energy necessary to transport a number of different substrates. This Streptococcus sanguinis (strain SK36) protein is Energy-coupling factor transporter ATP-binding protein EcfA1.